A 1541-amino-acid polypeptide reads, in one-letter code: WD repeat-containing protein 62 (1541 aa).

Ala2 carries the N-acetylalanine modification. Position 33 is a phosphoserine (Ser33). Phosphothreonine is present on Thr46. 12 WD repeats span residues Thr109–Glu150, Gly153–Ser194, Lys196–Val234, Ile291–Asn330, Ala357–Lys396, Phe402–Trp450, Asp490–Arg529, Ala532–Gln574, Asp578–His618, Ala626–Cys665, Gly671–Gly713, and His714–Met752. Ser501 carries the post-translational modification Phosphoserine. 2 disordered regions span residues Arg762 to Leu820 and Leu911 to Thr1050. Over residues Lys770 to Gln780 the composition is skewed to basic and acidic residues. The span at Glu781 to Gly795 shows a compositional bias: polar residues. The segment covering Gln797 to Glu809 has biased composition (acidic residues). One copy of the WD 13 repeat lies at Glu803–Val846. Residues Glu810–Leu820 show a composition bias toward basic and acidic residues. Residues Val937 to Val948 show a composition bias toward low complexity. Ser943 carries the post-translational modification Phosphoserine. Positions Pro1008–Gly1026 are enriched in pro residues. Residue Thr1050 is modified to Phosphothreonine. 3 positions are modified to phosphoserine: Ser1095, Ser1125, and Ser1151. Disordered stretches follow at residues Leu1133–Gly1153 and Ser1185–His1212. The stretch at Pro1138 to Leu1180 is one WD 14 repeat. A compositionally biased stretch (pro residues) spans Asp1193–Leu1202. Ser1235, Ser1255, and Ser1256 each carry phosphoserine. The tract at residues Thr1273 to His1293 is disordered. Residue Thr1275 is modified to Phosphothreonine.

Can form homodimers (via C-terminus). Interacts (via C-terminus) with MAPKBP1 (via C-terminus). Interacts with CDK5RAP2, CEP152, CEP63 and KIAA0753. CEP63, CDK5RAP2, CEP152, WDR62 are proposed to form a stepwise assembled complex at the centrosome forming a ring near parental centrioles.

The protein resides in the nucleus. It is found in the cytoplasm. Its subcellular location is the cytoskeleton. It localises to the spindle pole. The protein localises to the microtubule organizing center. The protein resides in the centrosome. It is found in the centriole. Required for cerebral cortical development. Plays a role in neuronal proliferation and migration. Plays a role in mother-centriole-dependent centriole duplication; the function seems also to involve CEP152, CDK5RAP2 and CEP63 through a stepwise assembled complex at the centrosome that recruits CDK2 required for centriole duplication. The polypeptide is WD repeat-containing protein 62 (WDR62) (Sus scrofa (Pig)).